The sequence spans 360 residues: MAKAPSWAGVGALAYKAPEALWPAEAVMDGTMEDSEAVQRATALIEQRLAQEEENEKLRGDARQKLPMDLLVLEDEKHHGAQSAALQKVKGQERVRKTSLDLRREIIDVGGIQNLIELRKKRKQKKRDALAASHEPPPEPEEITGPVDEETFLKAAVEGKMKVIEKFLADGGSADTCDQFRRTALHRASLEGHMEILEKLLDNGATVDFQDRLDCTAMHWACRGGHLEVVKLLQSHGADTNVRDKLLSTPLHVAVRTGQVEIVEHFLSLGLEINARDREGDTALHDAVRLNRYKIIKLLLLHGADMMTKNLAGKTPTDLVQLWQADTRHALEHPEPGAEHNGLEGPNDSGRETPQPVPAQ.

A may mediate interaction with PML, p53/TP53 and YBX1 region spans residues 5–120; the sequence is PSWAGVGALA…GIQNLIELRK (116 aa). At Ser-99 the chain carries Phosphoserine; by PKB/AKT2. A disordered region spans residues 126–147; sequence KRDALAASHEPPPEPEEITGPV. The segment covering 138-147 has biased composition (acidic residues); it reads PEPEEITGPV. 5 ANK repeats span residues 147 to 176, 180 to 209, 213 to 242, 246 to 275, and 279 to 308; these read VDEETFLKAAVEGKMKVIEKFLADGGSADT, FRRTALHRASLEGHMEILEKLLDNGATVDF, LDCTAMHWACRGGHLEVVKLLQSHGADTNV, LLSTPLHVAVRTGQVEIVEHFLSLGLEINA, and EGDTALHDAVRLNRYKIIKLLLLHGADMMT. A compositionally biased stretch (basic and acidic residues) spans 330 to 342; it reads ALEHPEPGAEHNG. The tract at residues 330–360 is disordered; it reads ALEHPEPGAEHNGLEGPNDSGRETPQPVPAQ.

As to quaternary structure, interacts with ID3; both proteins cooperate in myoblast differentiation. Interacts with TTN/titin. Interacts (via ANK repeats) with TCAP; the interaction is direct. Interacts with TJP1 (via PDZ domains). Interacts with PML; the interaction is direct. Interacts with p53/TP53. Interacts with YBX1. Interacts with AKT2. Post-translationally, phosphorylation at Ser-99 by PKB/AKT2 in response to oxidative stress induces translocation to the nucleus and negatively regulates myoblast differentiation. In terms of tissue distribution, mostly expressed in skeletal and cardiac muscles. Found in slow fibers. Also expressed in kidney, but to a lower extent (at protein level).

Its subcellular location is the cytoplasm. It is found in the myofibril. The protein resides in the sarcomere. It localises to the i band. The protein localises to the cytosol. Its subcellular location is the nucleus. It is found in the PML body. Functionally, functions as a negative regulator of myocyte differentiation. May interact with both sarcoplasmic structural proteins and nuclear proteins to regulate gene expression during muscle development and in response to muscle stress. The sequence is that of Ankyrin repeat domain-containing protein 2 (ANKRD2) from Homo sapiens (Human).